Reading from the N-terminus, the 196-residue chain is Imidazoleglycerol-phosphate dehydratase (196 aa).

Belongs to the imidazoleglycerol-phosphate dehydratase family.

The protein resides in the cytoplasm. It carries out the reaction D-erythro-1-(imidazol-4-yl)glycerol 3-phosphate = 3-(imidazol-4-yl)-2-oxopropyl phosphate + H2O. It participates in amino-acid biosynthesis; L-histidine biosynthesis; L-histidine from 5-phospho-alpha-D-ribose 1-diphosphate: step 6/9. The protein is Imidazoleglycerol-phosphate dehydratase of Clostridium novyi (strain NT).